Here is a 148-residue protein sequence, read N- to C-terminus: SsrA-binding protein (148 aa).

Positions 129-142 are enriched in basic and acidic residues; that stretch reads ETEKKRDWEREKAR. The disordered stretch occupies residues 129–148; the sequence is ETEKKRDWEREKARIMRAGT.

This sequence belongs to the SmpB family.

The protein resides in the cytoplasm. Required for rescue of stalled ribosomes mediated by trans-translation. Binds to transfer-messenger RNA (tmRNA), required for stable association of tmRNA with ribosomes. tmRNA and SmpB together mimic tRNA shape, replacing the anticodon stem-loop with SmpB. tmRNA is encoded by the ssrA gene; the 2 termini fold to resemble tRNA(Ala) and it encodes a 'tag peptide', a short internal open reading frame. During trans-translation Ala-aminoacylated tmRNA acts like a tRNA, entering the A-site of stalled ribosomes, displacing the stalled mRNA. The ribosome then switches to translate the ORF on the tmRNA; the nascent peptide is terminated with the 'tag peptide' encoded by the tmRNA and targeted for degradation. The ribosome is freed to recommence translation, which seems to be the essential function of trans-translation. This chain is SsrA-binding protein, found in Burkholderia lata (strain ATCC 17760 / DSM 23089 / LMG 22485 / NCIMB 9086 / R18194 / 383).